A 441-amino-acid polypeptide reads, in one-letter code: MSQLLTARQAEELHKSIIAYLASVNLTESSAALRAELGDSVSIDDATLKKYEGLLEKKWTSVVRLQKKNQDPTSWLPRSPARHILEGHREPVTCVAFHPVFSSLASGSDDTTIKIWDWELGELERTVKGHTKAVLDVDYGGPRGGTLLASCSSDLTIKLWDPSDNYKNIRTLPGHDHSVSSVRFIPSGAAGSPMSGNLLVSASRDKTLRIWDVTTGYCVKTLSGHVDWVRAVAPSLDGRFLFAAGDDRIPRLWDLSSAETKSTFLGHEHVIECVAIAPAASYPHLAVLSGLKKPPPVSSSAEFFATGSRDKTIRLWDSRGNLIKTLVGHDNWVRALAFHPGGKHLLSVADDKTIRCWDLTQECKCVRVISDAHGHFVTCLRWAPPLIKDGGANGESETNGAPAATATTNGVRPDPNAANKISIRCVIATGSVDRKVRIFAT.

Positions 9–41 (QAEELHKSIIAYLASVNLTESSAALRAELGDSV) constitute a LisH domain. WD repeat units follow at residues 87–128 (GHRE…RTVK), 130–170 (HTKA…KNIR), 174–221 (GHDH…CVKT), 224–263 (GHVDWVRAVAPSLDGRFLFAAGDDRIPRLWDLSSAETKST), 266–326 (GHEH…IKTL), 328–367 (GHDNWVRALAFHPGGKHLLSVADDKTIRCWDLTQECKCVR), 372–402 (AHGHFVTCLRWAPPLIKDGGANGESETNGAP), and 403–440 (AATATTNGVRPDPNAANKISIRCVIATGSVDRKVRIFA). A disordered region spans residues 390-415 (GGANGESETNGAPAATATTNGVRPDP). The span at 398–410 (TNGAPAATATTNG) shows a compositional bias: low complexity.

Belongs to the WD repeat LIS1/nudF family. In terms of assembly, self-associates. Interacts with nudE and dynein.

It localises to the cytoplasm. The protein localises to the cytoskeleton. It is found in the spindle pole. In terms of biological role, positively regulates the activity of the minus-end directed microtubule motor protein dynein. May enhance dynein-mediated microtubule sliding by targeting dynein to the microtubule plus end. Required for nuclear migration during vegetative growth as well as development. Required for retrograde early endosome (EE) transport from the hyphal tip. Required for localization of dynein to the mitotic spindle poles. Recruits additional proteins to the dynein complex at SPBs. This is Nuclear distribution protein nudF from Neosartorya fischeri (strain ATCC 1020 / DSM 3700 / CBS 544.65 / FGSC A1164 / JCM 1740 / NRRL 181 / WB 181) (Aspergillus fischerianus).